The primary structure comprises 187 residues: Ribosome-recycling factor (187 aa).

It belongs to the RRF family.

It localises to the cytoplasm. In terms of biological role, responsible for the release of ribosomes from messenger RNA at the termination of protein biosynthesis. May increase the efficiency of translation by recycling ribosomes from one round of translation to another. The sequence is that of Ribosome-recycling factor from Methylorubrum extorquens (strain CM4 / NCIMB 13688) (Methylobacterium extorquens).